A 77-amino-acid chain; its full sequence is uncharacterized protein (77 aa).

The tract at residues 56–77 (SVIPKQQPPSSAAAISESEFED) is disordered. A compositionally biased stretch (low complexity) spans 65–77 (SSAAAISESEFED).

This is an uncharacterized protein from Frog virus 3 (isolate Goorha) (FV-3).